We begin with the raw amino-acid sequence, 505 residues long: RNA-splicing ligase RtcB homolog (505 aa).

Mn(2+)-binding residues include D119, C122, H227, and H259. 226–230 contacts GMP; it reads NHYAE. Position 300 is a phosphoserine (S300). Position 353 (H353) interacts with Mn(2+). Residues 353–354, 402–405, S409, and 428–431 each bind GMP; these read HN, GGTM, and HGAG. H428 serves as the catalytic GMP-histidine intermediate. K496 participates in a covalent cross-link: Glycyl lysine isopeptide (Lys-Gly) (interchain with G-Cter in SUMO2). K504 contacts GMP.

Belongs to the RtcB family. Catalytic component of the tRNA-splicing ligase complex. It depends on Mn(2+) as a cofactor.

The protein localises to the nucleus. It is found in the cytoplasm. The enzyme catalyses a 3'-end 3'-phospho-ribonucleotide-RNA + a 5'-end dephospho-ribonucleoside-RNA + GTP = a ribonucleotidyl-ribonucleotide-RNA + GMP + diphosphate. The catalysed reaction is a 3'-end 2',3'-cyclophospho-ribonucleotide-RNA + a 5'-end dephospho-ribonucleoside-RNA + GTP + H2O = a ribonucleotidyl-ribonucleotide-RNA + GMP + diphosphate + H(+). Functionally, catalytic subunit of the tRNA-splicing ligase complex that acts by directly joining spliced tRNA halves to mature-sized tRNAs by incorporating the precursor-derived splice junction phosphate into the mature tRNA as a canonical 3',5'-phosphodiester. May act as an RNA ligase with broad substrate specificity, and may function toward other RNAs. In Macaca fascicularis (Crab-eating macaque), this protein is RNA-splicing ligase RtcB homolog.